Here is a 122-residue protein sequence, read N- to C-terminus: Large ribosomal subunit protein uL14c (122 aa).

The protein belongs to the universal ribosomal protein uL14 family. In terms of assembly, part of the 50S ribosomal subunit.

Its subcellular location is the plastid. It localises to the chloroplast. Functionally, binds to 23S rRNA. The polypeptide is Large ribosomal subunit protein uL14c (rpl14) (Bigelowiella natans (Pedinomonas minutissima)).